The chain runs to 151 residues: Cytochrome c-type biogenesis protein CcmE (151 aa).

At 1 to 8 (MNPLRRKR) the chain is on the cytoplasmic side. A helical; Signal-anchor for type II membrane protein transmembrane segment spans residues 9-29 (LLIILAILVGVGIAVGLALSA). At 30 to 151 (LQQNINLFYT…QSAPTPAKEG (122 aa)) the chain is on the periplasmic side. Residues His124 and Tyr128 each coordinate heme.

This sequence belongs to the CcmE/CycJ family.

Its subcellular location is the cell inner membrane. Its function is as follows. Heme chaperone required for the biogenesis of c-type cytochromes. Transiently binds heme delivered by CcmC and transfers the heme to apo-cytochromes in a process facilitated by CcmF and CcmH. The polypeptide is Cytochrome c-type biogenesis protein CcmE (Pseudomonas fluorescens (strain SBW25)).